Here is a 576-residue protein sequence, read N- to C-terminus: Apolipoprotein N-acyltransferase 1 (576 aa).

The next 7 helical transmembrane spans lie at 15-35 (LILC…FSFF), 38-58 (GVFA…TSIW), 60-80 (AFLW…YWIP), 92-112 (FVSI…FFLF), 128-148 (YILL…FQIF), 168-188 (ICGV…FLIL), and 204-224 (IASL…IGYI). The CN hydrolase domain occupies 236–538 (LSVLMIQPDT…TGTRAFSIRL (303 aa)). Catalysis depends on E285, which acts as the Proton acceptor. The active site involves K355. Catalysis depends on C446, which acts as the Nucleophile. Residues 549–569 (FGNSFLWIFCILILISRLIFV) form a helical membrane-spanning segment.

It belongs to the CN hydrolase family. Apolipoprotein N-acyltransferase subfamily.

Its subcellular location is the cell inner membrane. The enzyme catalyses N-terminal S-1,2-diacyl-sn-glyceryl-L-cysteinyl-[lipoprotein] + a glycerophospholipid = N-acyl-S-1,2-diacyl-sn-glyceryl-L-cysteinyl-[lipoprotein] + a 2-acyl-sn-glycero-3-phospholipid + H(+). The protein operates within protein modification; lipoprotein biosynthesis (N-acyl transfer). In terms of biological role, catalyzes the phospholipid dependent N-acylation of the N-terminal cysteine of apolipoprotein, the last step in lipoprotein maturation. The polypeptide is Apolipoprotein N-acyltransferase 1 (Leptospira interrogans serogroup Icterohaemorrhagiae serovar copenhageni (strain Fiocruz L1-130)).